A 478-amino-acid chain; its full sequence is Membrane-bound lytic murein transglycosylase F (478 aa).

A signal peptide spans 1–22 (MTRFLFAIILGFLLTACQQVTV). The non-LT domain stretch occupies residues 23 to 257 (EETEYVPHKL…HLNEKYFGHV (235 aa)). Residues 258–478 (KRFDYIDTRA…PGTLSPDKPK (221 aa)) are LT domain. The active site involves E302. The tract at residues 446–478 (SKQQNSDEEEPSDLASEDGPAPVPGTLSPDKPK) is disordered. Positions 451–461 (SDEEEPSDLAS) are enriched in acidic residues.

The protein in the N-terminal section; belongs to the bacterial solute-binding protein 3 family. In the C-terminal section; belongs to the transglycosylase Slt family.

It is found in the cell outer membrane. The catalysed reaction is Exolytic cleavage of the (1-&gt;4)-beta-glycosidic linkage between N-acetylmuramic acid (MurNAc) and N-acetylglucosamine (GlcNAc) residues in peptidoglycan, from either the reducing or the non-reducing ends of the peptidoglycan chains, with concomitant formation of a 1,6-anhydrobond in the MurNAc residue.. Murein-degrading enzyme that degrades murein glycan strands and insoluble, high-molecular weight murein sacculi, with the concomitant formation of a 1,6-anhydromuramoyl product. Lytic transglycosylases (LTs) play an integral role in the metabolism of the peptidoglycan (PG) sacculus. Their lytic action creates space within the PG sacculus to allow for its expansion as well as for the insertion of various structures such as secretion systems and flagella. The sequence is that of Membrane-bound lytic murein transglycosylase F from Shewanella sp. (strain ANA-3).